A 401-amino-acid chain; its full sequence is Argininosuccinate synthase (401 aa).

ATP contacts are provided by residues 7–15 (AYSGGLDTS) and Ala-34. L-citrulline contacts are provided by Tyr-85 and Ser-90. Gly-115 serves as a coordination point for ATP. Residues Thr-117, Asn-121, and Asp-122 each coordinate L-aspartate. Asn-121 contacts L-citrulline. L-citrulline is bound by residues Arg-125, Ser-174, Ser-183, Glu-259, and Tyr-271.

This sequence belongs to the argininosuccinate synthase family. Type 1 subfamily. Homotetramer.

Its subcellular location is the cytoplasm. It carries out the reaction L-citrulline + L-aspartate + ATP = 2-(N(omega)-L-arginino)succinate + AMP + diphosphate + H(+). It participates in amino-acid biosynthesis; L-arginine biosynthesis; L-arginine from L-ornithine and carbamoyl phosphate: step 2/3. This is Argininosuccinate synthase from Pelotomaculum thermopropionicum (strain DSM 13744 / JCM 10971 / SI).